A 379-amino-acid polypeptide reads, in one-letter code: Probable malonyl-CoA-acyl carrier protein transacylase, mitochondrial (379 aa).

The N-terminal 23 residues, 1–23 (MLAARRLLRSPRITGALSWSRWS), are a transit peptide targeting the mitochondrion. Catalysis depends on residues Ser-158 and His-275.

This sequence belongs to the type II malonyltransferase family.

The protein resides in the mitochondrion. It carries out the reaction holo-[ACP] + malonyl-CoA = malonyl-[ACP] + CoA. The protein operates within lipid metabolism; fatty acid biosynthesis. In terms of biological role, catalyzes the transfer of a malonyl moiety from malonyl-CoA to the free thiol group of the phosphopantetheine arm of the ACP protein. This suggests the existence of the biosynthesis of fatty acids in mitochondria. The polypeptide is Probable malonyl-CoA-acyl carrier protein transacylase, mitochondrial (Drosophila melanogaster (Fruit fly)).